Consider the following 359-residue polypeptide: Ni-sirohydrochlorin a,c-diamide reductive cyclase complex, component CfbD (359 aa).

This sequence belongs to the NifD/NifK/NifE/NifN family. As to quaternary structure, homodimer or monomer. The Ni-sirohydrochlorin a,c-diamide reductive cyclase complex is composed of a NifH homolog component CfbC and a NifD homolog component CfbD. [4Fe-4S] cluster serves as cofactor.

The enzyme catalyses Ni-sirohydrochlorin a,c-diamide + 3 AH2 + ATP + H2O = 15,17(3)-seco-F430-17(3)-acid + 3 A + ADP + phosphate. Involved in the biosynthesis of the unique nickel-containing tetrapyrrole coenzyme F430, the prosthetic group of methyl-coenzyme M reductase (MCR), which plays a key role in methanogenesis and anaerobic methane oxidation. Catalyzes both the six-electron reduction of the tetrahydroporphyrin ring system and the gamma-lactamization of the c-acetamide side chain of Ni-sirohydrochlorin a,c-diamide to yield 15,17(3)-seco-F430-17(3)-acid (seco-F430), the last intermediate in the biosynthesis of the coenzyme F430. This chain is Ni-sirohydrochlorin a,c-diamide reductive cyclase complex, component CfbD, found in Methanothermobacter thermautotrophicus (strain ATCC 29096 / DSM 1053 / JCM 10044 / NBRC 100330 / Delta H) (Methanobacterium thermoautotrophicum).